Reading from the N-terminus, the 459-residue chain is Argininosuccinate lyase (459 aa).

This sequence belongs to the lyase 1 family. Argininosuccinate lyase subfamily.

Its subcellular location is the cytoplasm. It catalyses the reaction 2-(N(omega)-L-arginino)succinate = fumarate + L-arginine. It participates in amino-acid biosynthesis; L-arginine biosynthesis; L-arginine from L-ornithine and carbamoyl phosphate: step 3/3. The protein is Argininosuccinate lyase of Staphylococcus aureus (strain MSSA476).